We begin with the raw amino-acid sequence, 492 residues long: ATP synthase subunit beta, chloroplastic (492 aa).

Residue glycine 170 to threonine 177 participates in ATP binding.

It belongs to the ATPase alpha/beta chains family. As to quaternary structure, F-type ATPases have 2 components, CF(1) - the catalytic core - and CF(0) - the membrane proton channel. CF(1) has five subunits: alpha(3), beta(3), gamma(1), delta(1), epsilon(1). CF(0) has four main subunits: a(1), b(1), b'(1) and c(9-12).

The protein localises to the plastid. Its subcellular location is the chloroplast thylakoid membrane. It carries out the reaction ATP + H2O + 4 H(+)(in) = ADP + phosphate + 5 H(+)(out). Its function is as follows. Produces ATP from ADP in the presence of a proton gradient across the membrane. The catalytic sites are hosted primarily by the beta subunits. This chain is ATP synthase subunit beta, chloroplastic, found in Marchantia polymorpha (Common liverwort).